A 247-amino-acid chain; its full sequence is uncharacterized protein (247 aa).

Low complexity-rich tracts occupy residues 1–12 (MFSPQQPMRNYP) and 21–43 (PNQRMMGRRPPNMRGPSFGAQQQ). Disordered stretches follow at residues 1–43 (MFSP…AQQQ) and 157–247 (LSKS…RLYI). 2 stretches are compositionally biased toward basic and acidic residues: residues 170–196 (ESEKQSVSEESSEKEKETETKTSDGNK) and 210–229 (KTTDNKEQELKTSAPKKKEA).

This is an uncharacterized protein from Bacillus subtilis (strain 168).